Reading from the N-terminus, the 241-residue chain is Adenosylcobinamide-GDP ribazoletransferase (241 aa).

Helical transmembrane passes span 34-54 (LGLPAVGLVSGLLAGVVAWAF), 108-128 (VGGLAIGSMALLLAVASFGWI), 184-206 (LPFSPVATLTCAVCSAVVAWTCL), and 220-240 (FLGASIWVSRVLSAVCLSSLP).

Belongs to the CobS family. Mg(2+) serves as cofactor.

It is found in the cell membrane. It catalyses the reaction alpha-ribazole + adenosylcob(III)inamide-GDP = adenosylcob(III)alamin + GMP + H(+). The enzyme catalyses alpha-ribazole 5'-phosphate + adenosylcob(III)inamide-GDP = adenosylcob(III)alamin 5'-phosphate + GMP + H(+). Its pathway is cofactor biosynthesis; adenosylcobalamin biosynthesis; adenosylcobalamin from cob(II)yrinate a,c-diamide: step 7/7. Its function is as follows. Joins adenosylcobinamide-GDP and alpha-ribazole to generate adenosylcobalamin (Ado-cobalamin). Also synthesizes adenosylcobalamin 5'-phosphate from adenosylcobinamide-GDP and alpha-ribazole 5'-phosphate. The protein is Adenosylcobinamide-GDP ribazoletransferase of Methanopyrus kandleri (strain AV19 / DSM 6324 / JCM 9639 / NBRC 100938).